A 2715-amino-acid chain; its full sequence is Histone-lysine N-methyltransferase 2B (2715 aa).

Over residues 1 to 11 the composition is skewed to gly residues; sequence MAAAAGGGSCP. Disordered stretches follow at residues 1–65, 81–302, 320–518, and 532–771; these read MAAA…GEDT, RRLW…GGLP, SLGL…PKST, and VSAR…QMPP. At Ala-2 the chain carries N-acetylalanine. Positions 12 to 24 are enriched in low complexity; it reads GPGSARGRFPGRP. Positions 17-36 match the Menin-binding motif (MBM) motif; that stretch reads RGRFPGRPRGAGGGGGRGGR. 2 stretches are compositionally biased toward gly residues: residues 25 to 38 and 49 to 60; these read RGAG…GRGN and RGGGATGPGGAE. Residues 37–44 constitute a DNA-binding region (a.T hook 1); sequence GNGAERVR. The span at 109-123 shows a compositional bias: acidic residues; sequence PEEESSDGESDEEEF. A DNA-binding region (a.T hook 2) is located at residues 110–117; the sequence is EEESSDGE. 3 positions are modified to phosphoserine: Ser-113, Ser-114, and Ser-118. Over residues 144-158 the composition is skewed to basic residues; that stretch reads QRGRAPRGRGRKHKT. Positions 160 to 176 are enriched in pro residues; the sequence is PLPPPRLADVAPTPPKT. Positions 199–208 are enriched in low complexity; that stretch reads RAQAPQAPRS. Ser-351 is subject to Phosphoserine. The a.T hook 3 DNA-binding region spans 357 to 365; it reads QEQKLDDEE. Over residues 361 to 374 the composition is skewed to acidic residues; it reads LDDEEEEKKEEEEK. Basic and acidic residues predominate over residues 375–387; that stretch reads DKEGEEKEERAVA. The segment covering 401–449 has biased composition (pro residues); it reads LPPPPLTPPAPSPPPPLPPPSTSPPPPLCPPPPPPVSPPPLPSPPPPPA. Residues 545 to 556 are compositionally biased toward basic and acidic residues; it reads RFMDEDPPKPPK. The span at 568 to 596 shows a compositional bias: pro residues; it reads TTSPPVPQEPAPVPSPPRAPTPPSTPVPL. Positions 597-608 are enriched in basic and acidic residues; sequence PEKRRSILREPT. The span at 618–637 shows a compositional bias: pro residues; sequence LPPPPPAPPPPPAPSPPPAP. Positions 731–751 are enriched in low complexity; it reads PQTQAQLLQPLQALQTQLLPQ. Residues 752-769 show a composition bias toward pro residues; that stretch reads ALPPPQPQLQPPPSPQQM. Lys-805 is covalently cross-linked (Glycyl lysine isopeptide (Lys-Gly) (interchain with G-Cter in SUMO2)). Disordered stretches follow at residues 819–868 and 894–959; these read PLSP…GPRI and SALP…HHGK. Phosphoserine occurs at positions 821, 844, and 861. Over residues 836 to 857 the composition is skewed to basic and acidic residues; the sequence is ISDRGPVRSEDESVEAKRERPS. Low complexity predominate over residues 907–917; it reads EDTSSASETES. The residue at position 936 (Ser-936) is a Phosphoserine. The segment covering 948 to 959 has biased composition (basic residues); that stretch reads TPRRSLPSHHGK. The CXXC-type zinc finger occupies 959–1006; it reads KKMRMARCGHCRGCLRVQDCGSCVNCLDKPKFGGPNTKKQCCVYRKCD. Zn(2+) is bound by residues Cys-966, Cys-969, Cys-972, Cys-978, Cys-981, Cys-984, Cys-1000, and Cys-1005. A disordered region spans residues 1027–1132; the sequence is LLPWDSDESP…RPRKPTLQPV (106 aa). Ser-1032, Ser-1035, Ser-1092, and Ser-1095 each carry phosphoserine. Lys-1136 is covalently cross-linked (Glycyl lysine isopeptide (Lys-Gly) (interchain with G-Cter in SUMO2)). A disordered region spans residues 1146 to 1166; the sequence is LAPGPFASFPNGWTGKQKSPD. 3 PHD-type zinc fingers span residues 1201–1252, 1249–1303, and 1335–1396; these read PMVC…CKFC, CKFC…CVRC, and GNYC…CAGA. Positions 1404–1504 constitute a Bromo domain; it reads ALSGALQGGL…GLLLKLLESA (101 aa). Residues 1545–1567 form a disordered region; sequence QQEPETPESGQPPGDPSAAFQGK. The segment at 1578-1618 adopts a C2HC pre-PHD-type zinc-finger fold; that stretch reads PRQCALCLKYGDADSKEAGRLLYIGQNEWTHVNCAIWSAEV. The segment at 1639–1686 adopts a PHD-type 4 zinc-finger fold; that stretch reads MRCELCLKPGATVGCCLSSCLSNFHFMCARASYCIFQDDKKVFCQKHT. The region spanning 1727-1783 is the FYR N-terminal domain; that stretch reads AINVLIGSIRIDSLGTLSDLSDCEGRLFPIGYQCSRLYWSTVDARRRCWYRCRILEY. Disordered stretches follow at residues 1806–1978, 2008–2093, 2118–2162, and 2280–2412; these read HSPA…PDFE, VAAG…VVRA, LKNL…PTRT, and RVST…RTGP. The span at 1876-1894 shows a compositional bias: low complexity; the sequence is PLGGVSFGPLPSPGSPSSL. Ser-1930 and Ser-1936 each carry phosphoserine. Positions 1960–1972 are enriched in pro residues; it reads PPGPAPSPPPPED. Residues 2062 to 2072 are compositionally biased toward acidic residues; that stretch reads DGVDDGTDSEA. Phosphothreonine occurs at positions 2068 and 2083. Residues 2144 to 2153 show a composition bias toward polar residues; sequence NGSQPSQGLT. A phosphoserine mark is found at Ser-2288 and Ser-2348. Positions 2342–2351 are enriched in low complexity; the sequence is EPAGEESPGP. The span at 2359 to 2373 shows a compositional bias: pro residues; that stretch reads LPLPEDGPPQVPDGP. The region spanning 2411-2492 is the FYR C-terminal domain; that stretch reads GPHLRFEISS…QRCQHYKFRY (82 aa). Residues 2508–2513 carry the WDR5 interaction motif (WIN) motif; the sequence is GAARAE. One can recognise an SET domain in the interval 2575-2691; that stretch reads EAVGVYRSAI…RGEELTYDYK (117 aa). S-adenosyl-L-methionine contacts are provided by residues His-2585, Arg-2587, Tyr-2629, and 2652 to 2653; that span reads NH. Zn(2+)-binding residues include Cys-2655 and Cys-2703. Positions 2699-2715 constitute a Post-SET domain; that stretch reads NKLPCNCGAKRCRRFLN. Asn-2704 contributes to the S-adenosyl-L-methionine binding site. Zn(2+)-binding residues include Cys-2705 and Cys-2710.

It belongs to the class V-like SAM-binding methyltransferase superfamily. Histone-lysine methyltransferase family. TRX/MLL subfamily. In terms of assembly, component of the menin-associated histone methyltransferase complex, at least composed of KMT2B/MLL4, ASH2L, RBBP5, WDR5, DPY30, MEN1; the complex interacts with POLR2A and POLR2B via MEN1. Interacts with NFE2. Interacts with KDM6B. Interacts (via WIN motif) with WDR5. Interacts (via MBM motif) with MEN1. Forms a core complex with the evolutionary conserved subcomplex WRAD composed of WDR5, RBBP5, ASH2L/ASH2 and DPY30 subunits; WRAD differentially stimulates the methyltransferase activity. As to expression, widely expressed. Highest levels in testis. Also found in brain with higher expression in the cerebellum than in any other region, bone marrow, heart, muscle, kidney, placenta, spleen, thymus, prostate, ovary, intestine, colon, peripheral blood lymphocytes and pancreas. Often amplified in pancreatic carcinomas.

The protein resides in the nucleus. The catalysed reaction is L-lysyl(4)-[histone H3] + S-adenosyl-L-methionine = N(6)-methyl-L-lysyl(4)-[histone H3] + S-adenosyl-L-homocysteine + H(+). It catalyses the reaction N(6)-methyl-L-lysyl(4)-[histone H3] + S-adenosyl-L-methionine = N(6),N(6)-dimethyl-L-lysyl(4)-[histone H3] + S-adenosyl-L-homocysteine + H(+). Histone methyltransferase that catalyzes methyl group transfer from S-adenosyl-L-methionine to the epsilon-amino group of 'Lys-4' of histone H3 (H3K4) via a non-processive mechanism. Part of chromatin remodeling machinery predominantly forms H3K4me1 and H3K4me2 methylation marks at active chromatin sites where transcription and DNA repair take place. Likely plays a redundant role with KMT2C in enriching H3K4me1 marks on primed and active enhancer elements. Plays a central role in beta-globin locus transcription regulation by being recruited by NFE2. Plays an important role in controlling bulk H3K4me during oocyte growth and preimplantation development. Required during the transcriptionally active period of oocyte growth for the establishment and/or maintenance of bulk H3K4 trimethylation (H3K4me3), global transcriptional silencing that preceeds resumption of meiosis, oocyte survival and normal zygotic genome activation. This is Histone-lysine N-methyltransferase 2B (KMT2B) from Homo sapiens (Human).